We begin with the raw amino-acid sequence, 416 residues long: Interleukin-1 receptor type 2 (416 aa).

Residues 1–13 (MFILLVLVTGVSA) form the signal peptide. Over 14–355 (FTTPAVVHTG…FQSLHTTVKE (342 aa)) the chain is Extracellular. Ig-like C2-type domains are found at residues 29–136 (PVTS…LELK), 146–233 (PLVS…YNIT), and 249–357 (PVII…KEVS). 3 cysteine pairs are disulfide-bonded: C42-C128, C64-C120, and C164-C219. N-linked (GlcNAc...) asparagine glycosylation is found at N124, N208, N231, and N289. Cysteines 270 and 338 form a disulfide. A helical transmembrane segment spans residues 356-381 (VSSTFSWGIALAPLSLIILVVGAIWI). Residues 382–416 (RRRCKRQAGKTYGLTKLPTDNQDFPSSPNQIKEMK) are Cytoplasmic-facing. Positions 396 to 416 (TKLPTDNQDFPSSPNQIKEMK) are disordered. Over residues 399–416 (PTDNQDFPSSPNQIKEMK) the composition is skewed to polar residues.

It belongs to the interleukin-1 receptor family. In terms of assembly, associates with IL1RAP to form a non-signaling interleukin-1 receptor complex. Post-translationally, a soluble form (sIL1R2) can also be produced by proteolytic cleavage at the cell surface (shedding) involving a metalloproteinase.

It is found in the membrane. The protein resides in the cell membrane. Its subcellular location is the secreted. Non-signaling receptor for IL1A, IL1B and IL1RN. Reduces IL1B activities. Serves as a decoy receptor by competitive binding to IL1B and preventing its binding to IL1R1. Also modulates cellular response through non-signaling association with IL1RAP after binding to IL1B. IL1R2 (membrane and secreted forms) preferentially binds IL1B and poorly IL1A and IL1RN. The secreted IL1R2 recruits secreted IL1RAP with high affinity; this complex formation may be the dominant mechanism for neutralization of IL1B by secreted/soluble receptors. This is Interleukin-1 receptor type 2 (Il1r2) from Rattus norvegicus (Rat).